Consider the following 194-residue polypeptide: MFEYLKGTVADILIDKIIVEVNGIGYRIHSTIHSVSQIKKGDAITVYTHLVVREDELSLYGFMSIEELDMFQKLISVSKIGPKVASGILSAYTPNKLSAYILSKDISALSKAPGVGKKTAERIILELKDKVDKTNVVYDYTLFNDDHKDDDEAVQALMALGYSKLESEKAVEAVRDMSLGTEDVIKRALKWLMK.

Positions 1-63 (MFEYLKGTVA…EDELSLYGFM (63 aa)) are domain I. Positions 64–142 (SIEELDMFQK…KTNVVYDYTL (79 aa)) are domain II. The tract at residues 143–151 (FNDDHKDDD) is flexible linker. The tract at residues 151 to 194 (DEAVQALMALGYSKLESEKAVEAVRDMSLGTEDVIKRALKWLMK) is domain III.

This sequence belongs to the RuvA family. As to quaternary structure, homotetramer. Forms an RuvA(8)-RuvB(12)-Holliday junction (HJ) complex. HJ DNA is sandwiched between 2 RuvA tetramers; dsDNA enters through RuvA and exits via RuvB. An RuvB hexamer assembles on each DNA strand where it exits the tetramer. Each RuvB hexamer is contacted by two RuvA subunits (via domain III) on 2 adjacent RuvB subunits; this complex drives branch migration. In the full resolvosome a probable DNA-RuvA(4)-RuvB(12)-RuvC(2) complex forms which resolves the HJ.

It is found in the cytoplasm. The RuvA-RuvB-RuvC complex processes Holliday junction (HJ) DNA during genetic recombination and DNA repair, while the RuvA-RuvB complex plays an important role in the rescue of blocked DNA replication forks via replication fork reversal (RFR). RuvA specifically binds to HJ cruciform DNA, conferring on it an open structure. The RuvB hexamer acts as an ATP-dependent pump, pulling dsDNA into and through the RuvAB complex. HJ branch migration allows RuvC to scan DNA until it finds its consensus sequence, where it cleaves and resolves the cruciform DNA. The sequence is that of Holliday junction branch migration complex subunit RuvA from Alkaliphilus oremlandii (strain OhILAs) (Clostridium oremlandii (strain OhILAs)).